The sequence spans 230 residues: Demethylmenaquinone methyltransferase (230 aa).

Residues T62, D80, 100-101 (DA), and S117 each bind S-adenosyl-L-methionine.

This sequence belongs to the class I-like SAM-binding methyltransferase superfamily. MenG/UbiE family.

It catalyses the reaction a 2-demethylmenaquinol + S-adenosyl-L-methionine = a menaquinol + S-adenosyl-L-homocysteine + H(+). It participates in quinol/quinone metabolism; menaquinone biosynthesis; menaquinol from 1,4-dihydroxy-2-naphthoate: step 2/2. Functionally, methyltransferase required for the conversion of demethylmenaquinol (DMKH2) to menaquinol (MKH2). The protein is Demethylmenaquinone methyltransferase of Mycobacterium sp. (strain JLS).